A 145-amino-acid polypeptide reads, in one-letter code: 3-dehydroquinate dehydratase (145 aa).

The active-site Proton acceptor is Tyr-22. Residues Asn-71, His-77, and Asp-84 each coordinate substrate. His-97 (proton donor) is an active-site residue. Substrate-binding positions include 98–99 (IS) and Arg-108.

Belongs to the type-II 3-dehydroquinase family. Homododecamer.

It catalyses the reaction 3-dehydroquinate = 3-dehydroshikimate + H2O. The protein operates within metabolic intermediate biosynthesis; chorismate biosynthesis; chorismate from D-erythrose 4-phosphate and phosphoenolpyruvate: step 3/7. Functionally, catalyzes a trans-dehydration via an enolate intermediate. The protein is 3-dehydroquinate dehydratase of Thermotoga neapolitana (strain ATCC 49049 / DSM 4359 / NBRC 107923 / NS-E).